A 1000-amino-acid chain; its full sequence is Chloride channel protein D (1000 aa).

2 stretches are compositionally biased toward low complexity: residues 1 to 16 (MSSG…NDGN) and 38 to 60 (NNNN…NSSV). Residues 1–90 (MSSGNPFDNG…SYDDDGDDEE (90 aa)) form a disordered region. The Cytoplasmic portion of the chain corresponds to 1 to 256 (MSSGNPFDNG…LASDHEVLRW (256 aa)). Residues 71–80 (RIQEEERLTE) are compositionally biased toward basic and acidic residues. Helical transmembrane passes span 257–277 (IVSL…HACV), 290–310 (AVLE…NTLL), 416–436 (GAGA…LFSL), 442–462 (FWSI…TYTM), 493–513 (IIPF…FTWI), 534–554 (LEVF…PLFF), 678–698 (LGLW…AYTA), 710–730 (MLVI…HILG), 733–753 (VSID…GGVS), and 772–792 (YLLP…ALIH). 2 CBS domains span residues 824 to 881 (MAKK…ISDV) and 926 to 984 (MNLT…YREL).

The protein belongs to the chloride channel (TC 2.A.49) family.

It is found in the membrane. In terms of biological role, voltage-gated chloride channel. Chloride channels may have several functions including the regulation of cell volume, membrane potential stabilization and signal transduction. Required for normal aggregation. The protein is Chloride channel protein D (clcD) of Dictyostelium discoideum (Social amoeba).